Here is a 207-residue protein sequence, read N- to C-terminus: Protein GrpE (207 aa).

The span at 1–11 (MTETDGQKDNN) shows a compositional bias: basic and acidic residues. Residues 1-39 (MTETDGQKDNNQDTAQAAADPVVSKPYIMPDDPEEGSNE) are disordered.

The protein belongs to the GrpE family. In terms of assembly, homodimer.

The protein resides in the cytoplasm. Participates actively in the response to hyperosmotic and heat shock by preventing the aggregation of stress-denatured proteins, in association with DnaK and GrpE. It is the nucleotide exchange factor for DnaK and may function as a thermosensor. Unfolded proteins bind initially to DnaJ; upon interaction with the DnaJ-bound protein, DnaK hydrolyzes its bound ATP, resulting in the formation of a stable complex. GrpE releases ADP from DnaK; ATP binding to DnaK triggers the release of the substrate protein, thus completing the reaction cycle. Several rounds of ATP-dependent interactions between DnaJ, DnaK and GrpE are required for fully efficient folding. This chain is Protein GrpE, found in Rhodopseudomonas palustris (strain TIE-1).